The following is a 725-amino-acid chain: Prolyl 3-hydroxylase 1 (725 aa).

The signal sequence occupies residues 1 to 14; it reads MALLLPLLPLLVWA. A TPR 1 repeat occupies 36-69; that stretch reads PDALFAAGAEAYARGDWPAVVLQMERALRARAAI. An N-linked (GlcNAc...) asparagine glycan is attached at asparagine 82. TPR repeat units follow at residues 136-169, 198-231, and 294-327; these read RSPYNYLQVAYFKINKVAKAVAAAHTFFVANPEH, HMTEFRLGVRFYSEEQPAAAVLHLEKALQEYFVA, and PSHFNYLQFAYYNNGNYEKAIECAKTYLLFFPND. The stretch at 394-441 forms a coiled coil; the sequence is KRLREKQKVERETAARISEEIGNLMKEIETLVEEKAKESAEMSKFIRE. N-linked (GlcNAc...) asparagine glycans are attached at residues asparagine 460 and asparagine 533. The Fe2OG dioxygenase domain occupies 557-671; it reads SHLVCRTAID…RCAIALWFTL (115 aa). 3 residues coordinate Fe cation: histidine 580, aspartate 582, and histidine 652. The active site involves arginine 662. Over residues 701-715 the composition is skewed to polar residues; the sequence is ETSAEQEPTAATSTA. The tract at residues 701–725 is disordered; it reads ETSAEQEPTAATSTAGLHAAGKDEL. The short motif at 722–725 is the Prevents secretion from ER element; it reads KDEL.

The protein belongs to the leprecan family. In terms of assembly, binds unfolded collagen in a complex with CYPB and CRTAP. Fe cation serves as cofactor. Requires L-ascorbate as cofactor. Expressed in embryonic dermis, tendon, cartilage, liver and kidney. Expression in the kidney is restricted to the calyx. In the liver, expression is restricted to the interlobular septum.

The protein localises to the endoplasmic reticulum. It carries out the reaction L-prolyl-[collagen] + 2-oxoglutarate + O2 = trans-3-hydroxy-L-prolyl-[collagen] + succinate + CO2. Its function is as follows. Has prolyl 3-hydroxylase activity catalyzing the post-translational formation of 3-hydroxyproline in -Xaa-Pro-Gly-sequences in collagens, especially types IV and V. May be involved in the secretoty pathway of cells. Has growth suppressive activity in fibroblasts. In Gallus gallus (Chicken), this protein is Prolyl 3-hydroxylase 1.